Here is a 302-residue protein sequence, read N- to C-terminus: Nucleotide-binding protein Bamb_2855 (302 aa).

8 to 15 provides a ligand contact to ATP; sequence GISGSGKS. A GTP-binding site is contributed by 57-60; it reads DARS.

Belongs to the RapZ-like family.

In terms of biological role, displays ATPase and GTPase activities. In Burkholderia ambifaria (strain ATCC BAA-244 / DSM 16087 / CCUG 44356 / LMG 19182 / AMMD) (Burkholderia cepacia (strain AMMD)), this protein is Nucleotide-binding protein Bamb_2855.